The chain runs to 332 residues: 4-hydroxythreonine-4-phosphate dehydrogenase (332 aa).

Positions 136 and 137 each coordinate substrate. A divalent metal cation is bound by residues His166, His211, and His266. Substrate-binding residues include Lys274, Asn283, and Arg292.

This sequence belongs to the PdxA family. As to quaternary structure, homodimer. Requires Zn(2+) as cofactor. Mg(2+) serves as cofactor. It depends on Co(2+) as a cofactor.

Its subcellular location is the cytoplasm. The enzyme catalyses 4-(phosphooxy)-L-threonine + NAD(+) = 3-amino-2-oxopropyl phosphate + CO2 + NADH. It functions in the pathway cofactor biosynthesis; pyridoxine 5'-phosphate biosynthesis; pyridoxine 5'-phosphate from D-erythrose 4-phosphate: step 4/5. Its function is as follows. Catalyzes the NAD(P)-dependent oxidation of 4-(phosphooxy)-L-threonine (HTP) into 2-amino-3-oxo-4-(phosphooxy)butyric acid which spontaneously decarboxylates to form 3-amino-2-oxopropyl phosphate (AHAP). The chain is 4-hydroxythreonine-4-phosphate dehydrogenase from Wigglesworthia glossinidia brevipalpis.